The chain runs to 935 residues: C-1-tetrahydrofolate synthase, cytoplasmic (935 aa).

Met1 is subject to N-acetylmethionine. Residues 2-291 (APAEILNGKE…MLMQSTVESA (290 aa)) are methylenetetrahydrofolate dehydrogenase and methenyltetrahydrofolate cyclohydrolase (D/C) domain. Substrate contacts are provided by residues 52 to 56 (YINVK) and 99 to 101 (VQL). The active site involves Lys56. NADP(+) is bound by residues 172 to 174 (GRS) and Ser197. 272 to 276 (PGGVG) is a binding site for substrate. The tract at residues 310-935 (LNLKTPVPSD…PETEQVNGLF (626 aa)) is formyltetrahydrofolate synthetase domain. Position 318 is a phosphoserine (Ser318). 380–387 (TPLGEGKS) serves as a coordination point for ATP. 2 positions are modified to phosphoserine: Ser413 and Ser490.

It in the N-terminal section; belongs to the tetrahydrofolate dehydrogenase/cyclohydrolase family. The protein in the C-terminal section; belongs to the formate--tetrahydrofolate ligase family. In terms of assembly, homodimer. In terms of tissue distribution, ubiquitous.

It is found in the cytoplasm. The catalysed reaction is (6R)-5,10-methylene-5,6,7,8-tetrahydrofolate + NADP(+) = (6R)-5,10-methenyltetrahydrofolate + NADPH. It catalyses the reaction (6R)-5,10-methenyltetrahydrofolate + H2O = (6R)-10-formyltetrahydrofolate + H(+). The enzyme catalyses (6S)-5,6,7,8-tetrahydrofolate + formate + ATP = (6R)-10-formyltetrahydrofolate + ADP + phosphate. It participates in one-carbon metabolism; tetrahydrofolate interconversion. Its function is as follows. Trifunctional enzyme that catalyzes the interconversion of three forms of one-carbon-substituted tetrahydrofolate: (6R)-5,10-methylene-5,6,7,8-tetrahydrofolate, 5,10-methenyltetrahydrofolate and (6S)-10-formyltetrahydrofolate. These derivatives of tetrahydrofolate are differentially required in nucleotide and amino acid biosynthesis, (6S)-10-formyltetrahydrofolate being required for purine biosynthesis while (6R)-5,10-methylene-5,6,7,8-tetrahydrofolate is used for serine and methionine biosynthesis for instance. This Homo sapiens (Human) protein is C-1-tetrahydrofolate synthase, cytoplasmic (MTHFD1).